The chain runs to 219 residues: Small ribosomal subunit protein uS4 (219 aa).

The S4 RNA-binding domain maps to 112-174; that stretch reads RRLQTQVLRL…GSSPLMSESH (63 aa). The disordered stretch occupies residues 193–219; that stretch reads KAAAEAKQARERPPERGGGRKKRGGRR. The span at 199-210 shows a compositional bias: basic and acidic residues; it reads KQARERPPERGG.

It belongs to the universal ribosomal protein uS4 family. As to quaternary structure, part of the 30S ribosomal subunit. Contacts protein S5. The interaction surface between S4 and S5 is involved in control of translational fidelity.

In terms of biological role, one of the primary rRNA binding proteins, it binds directly to 16S rRNA where it nucleates assembly of the body of the 30S subunit. Functionally, with S5 and S12 plays an important role in translational accuracy. The polypeptide is Small ribosomal subunit protein uS4 (Methanosarcina mazei (strain ATCC BAA-159 / DSM 3647 / Goe1 / Go1 / JCM 11833 / OCM 88) (Methanosarcina frisia)).